The primary structure comprises 119 residues: Large ribosomal subunit protein uL22 (119 aa).

The protein belongs to the universal ribosomal protein uL22 family. In terms of assembly, part of the 50S ribosomal subunit.

Its function is as follows. This protein binds specifically to 23S rRNA; its binding is stimulated by other ribosomal proteins, e.g. L4, L17, and L20. It is important during the early stages of 50S assembly. It makes multiple contacts with different domains of the 23S rRNA in the assembled 50S subunit and ribosome. Functionally, the globular domain of the protein is located near the polypeptide exit tunnel on the outside of the subunit, while an extended beta-hairpin is found that lines the wall of the exit tunnel in the center of the 70S ribosome. This is Large ribosomal subunit protein uL22 from Rickettsia akari (strain Hartford).